A 227-amino-acid chain; its full sequence is Cytidylate kinase (227 aa).

10 to 18 (GPASSGKST) is an ATP binding site.

The protein belongs to the cytidylate kinase family. Type 1 subfamily.

It is found in the cytoplasm. The catalysed reaction is CMP + ATP = CDP + ADP. The enzyme catalyses dCMP + ATP = dCDP + ADP. This is Cytidylate kinase from Streptococcus agalactiae serotype V (strain ATCC BAA-611 / 2603 V/R).